Consider the following 128-residue polypeptide: Sulfurtransferase TusD (128 aa).

The Cysteine persulfide intermediate role is filled by C78.

The protein belongs to the DsrE/TusD family. As to quaternary structure, heterohexamer, formed by a dimer of trimers. The hexameric TusBCD complex contains 2 copies each of TusB, TusC and TusD. The TusBCD complex interacts with TusE.

The protein localises to the cytoplasm. Its function is as follows. Part of a sulfur-relay system required for 2-thiolation of 5-methylaminomethyl-2-thiouridine (mnm(5)s(2)U) at tRNA wobble positions. Accepts sulfur from TusA and transfers it in turn to TusE. This is Sulfurtransferase TusD from Enterobacter sp. (strain 638).